Reading from the N-terminus, the 153-residue chain is Alpha-amylase type B isozyme (153 aa).

Substrate contacts are provided by residues K19, 25–27 (GWW), H38, Q44, K123, and W150.

The protein belongs to the glycosyl hydrolase 13 family. In terms of assembly, monomer. The cofactor is Ca(2+).

The catalysed reaction is Endohydrolysis of (1-&gt;4)-alpha-D-glucosidic linkages in polysaccharides containing three or more (1-&gt;4)-alpha-linked D-glucose units.. In Hordeum vulgare (Barley), this protein is Alpha-amylase type B isozyme (AMY1.4).